A 225-amino-acid polypeptide reads, in one-letter code: Uridylate kinase (225 aa).

9–10 is an ATP binding site; it reads GS. Gly-44 is a UMP binding site. Positions 45 and 49 each coordinate ATP. UMP contacts are provided by residues Asp-66 and 114-120; that span reads THPGHTT. ATP contacts are provided by Thr-140, Asn-141, Tyr-146, and Asp-149.

This sequence belongs to the UMP kinase family. Homohexamer.

The protein localises to the cytoplasm. The enzyme catalyses UMP + ATP = UDP + ADP. Its pathway is pyrimidine metabolism; CTP biosynthesis via de novo pathway; UDP from UMP (UMPK route): step 1/1. Its activity is regulated as follows. Inhibited by UTP. Functionally, catalyzes the reversible phosphorylation of UMP to UDP. This Thermococcus onnurineus (strain NA1) protein is Uridylate kinase.